Here is a 2462-residue protein sequence, read N- to C-terminus: Serine/threonine-protein kinase Wnk (2462 aa).

3 disordered regions span residues 18-133 (NRAR…ASKS), 146-248 (NTLP…KSSS), and 365-461 (EDDV…DDDP). Polar residues-rich tracts occupy residues 29–58 (DGTTSCTTQPQRNTSISSEEQTVQGANIQK) and 65–78 (NRSASSRQKPNPTS). A compositionally biased stretch (low complexity) spans 94–124 (TLSAHTSTSSTTSIQSSPIEPASSLPTLNTT). Positions 146 to 155 (NTLPGKTASS) are enriched in polar residues. 3 stretches are compositionally biased toward basic and acidic residues: residues 190-205 (QSREQNEDEMDSKIEP), 237-247 (DTKKMEARKSS), and 396-413 (QSEKQAKSFDDITKKAES). Residues 414–452 (SEASAEEAAVTGSSTDASASPLPSTSLVSTTSSATSITK) are compositionally biased toward low complexity. Residues 471 to 729 (FKYDKEVGRG…CNELLESEFF (259 aa)) enclose the Protein kinase domain. ATP contacts are provided by residues Ser-481, 551–554 (TELM), and Lys-601. Asp-618 functions as the Proton acceptor in the catalytic mechanism. Residues Ser-628 and Ser-632 each carry the phosphoserine; by autocatalysis modification. 3 disordered regions span residues 844–873 (LQKQRESLPTNVDEDEEEEEESEDEEDGVK), 893–923 (LALSTNSVEPQQLSTRSNTSIPNSGIQQPVQ), and 1006–1055 (PQQQ…LQQQ). Acidic residues predominate over residues 855-870 (VDEDEEEEEESEDEED). A compositionally biased stretch (polar residues) spans 893 to 918 (LALSTNSVEPQQLSTRSNTSIPNSGI). Low complexity-rich tracts occupy residues 1006–1034 (PQQQVNQQQQQPQMMQQIPQQVQVQQPQT) and 1041–1055 (HEQQPQQQQQPLQQQ). The stretch at 1142–1178 (AQHQLQQLQQQQLQQQQLQQQQQIQQQQLQQQQLQQQ) forms a coiled coil. A compositionally biased stretch (polar residues) spans 1236–1251 (QGGQVTLSDAQQQQHP). 9 disordered regions span residues 1236–1256 (QGGQVTLSDAQQQQHPGFSAV), 1322–1382 (QQQQ…EQIS), 1418–1465 (GALE…PKLS), 1554–1578 (LTRQRSTFRSHQRHRSRDETASDIT), 1615–1699 (NIPN…KDKK), 1762–1790 (DTSENAQQATEAEAEKPKDKSGQAVGNQG), 1828–1895 (QASP…SVGS), 1929–1966 (HEKQLSKQPSLEKPSATSILTNNSDPPQRNPSNGSINQ), and 2122–2229 (THVQ…FIQS). Positions 1559–1568 (STFRSHQRHR) are enriched in basic residues. Low complexity predominate over residues 1627 to 1641 (STPPTTTSTMSSSST). The segment covering 1642 to 1674 (ASRDAPNSSNDVTIGSGSVSRKTSTASEYTSLS) has biased composition (polar residues). Polar residues-rich tracts occupy residues 1828–1852 (QASPAMSSLKATSGQPQTQEITKPN), 1861–1894 (SVGQNTPTAALTSARGSGSSVYNSRRTSIDNSVG), and 1943–1966 (SATSILTNNSDPPQRNPSNGSINQ). Positions 2125–2136 (QQPSNLQPQQQS) are enriched in low complexity. Residues 2137 to 2160 (VHPNMTQQPQQTPLNGHPSMVNTL) show a composition bias toward polar residues. The span at 2161 to 2211 (QQQPPQQSLPMQTIQSQQQQHNQMPIISQQQQQQILMQQQQQQGSQQGSQQ) shows a compositional bias: low complexity. Residues 2212-2229 (FNLPGTQQTHPQHQFIQS) show a composition bias toward polar residues.

It belongs to the protein kinase superfamily. Ser/Thr protein kinase family. WNK subfamily. Mg(2+) is required as a cofactor. Post-translationally, autophosphorylated. Autophosphorylation at Ser-628 and Ser-632 promotes its activity.

The protein resides in the cytoplasm. The enzyme catalyses L-seryl-[protein] + ATP = O-phospho-L-seryl-[protein] + ADP + H(+). It catalyses the reaction L-threonyl-[protein] + ATP = O-phospho-L-threonyl-[protein] + ADP + H(+). Activated in response to hyperosmotic stress: cell shrinkage promotes formation of a membraneless compartment that concentrates wnk-1 with its downstrem substrates. Activation requires autophosphorylation. Autophosphorylation and subsequent activation is inhibited by increases in intracellular Cl(-) or K(+). Serine/threonine-protein kinase component of the WNK-SPAK/OSR1 kinase cascade, which plays an important role in the regulation of electrolyte homeostasis and regulatory volume increase in response to hyperosmotic stress. Wnk mediates regulatory volume increase in response to hyperosmotic stress by acting as a molecular crowding sensor, which senses cell shrinkage and mediates formation of a membraneless compartment by undergoing liquid-liquid phase separation. The membraneless compartment concentrates Wnk with its substrate Fray, promoting Wnk-dependent phosphorylation and activation of downstream kinase Fray. Following activation, Fray catalyzes phosphorylation of ion cotransporters Ncc69 and Irk1, regulating their activity. Phosphorylation of Na-K-Cl cotransporter Ncc69 promotes its activation and ion influx. Involved in circadian rhythms in small ventral lateral (sLNv) pacemaker neurons: in the morning, Wnk activity is repressed by high levels of intracellular chloride; in contrast Wnk activation in the evening promotes the activation of the inwardly rectifying potassium channel Irk1 via Fray. Acts as a positive regulator of the canonical Wnt signaling pathway during wing disk development. The sequence is that of Serine/threonine-protein kinase Wnk from Drosophila melanogaster (Fruit fly).